A 210-amino-acid polypeptide reads, in one-letter code: MTNLNYQQTHFVMSAPDIRHLPSDRGIEVAFAGRSNAGKSSALNTLTNQKSLARTSKTPGRTQLINLFEVVDGKRLVDLPGYGYAEVPEEMKRKWQRALGEYLEKRQSLQGLVVLMDIRHPLKDLDQQMIQWAVESNIQVLVLLTKADKLASGARKAQLNMVREAVLAFNGDVQVEAFSSLKKQGVDKLRQKLDSWFSELAPVEEIQDGE.

One can recognise an EngB-type G domain in the interval 25-199 (RGIEVAFAGR…RQKLDSWFSE (175 aa)). GTP-binding positions include 33-40 (GRSNAGKS), 60-64 (GRTQL), 78-81 (DLPG), 145-148 (TKAD), and 178-180 (FSS). Mg(2+) contacts are provided by Ser40 and Thr62.

This sequence belongs to the TRAFAC class TrmE-Era-EngA-EngB-Septin-like GTPase superfamily. EngB GTPase family. It depends on Mg(2+) as a cofactor.

Functionally, necessary for normal cell division and for the maintenance of normal septation. The chain is Probable GTP-binding protein EngB from Salmonella paratyphi B (strain ATCC BAA-1250 / SPB7).